Consider the following 53-residue polypeptide: ATP synthase protein 8 (53 aa).

A helical membrane pass occupies residues 4 to 24 (MAPISWLLLFIIFSITFILFC).

The protein belongs to the ATPase protein 8 family. F-type ATPases have 2 components, CF(1) - the catalytic core - and CF(0) - the membrane proton channel.

It is found in the mitochondrion membrane. Its function is as follows. Mitochondrial membrane ATP synthase (F(1)F(0) ATP synthase or Complex V) produces ATP from ADP in the presence of a proton gradient across the membrane which is generated by electron transport complexes of the respiratory chain. F-type ATPases consist of two structural domains, F(1) - containing the extramembraneous catalytic core and F(0) - containing the membrane proton channel, linked together by a central stalk and a peripheral stalk. During catalysis, ATP synthesis in the catalytic domain of F(1) is coupled via a rotary mechanism of the central stalk subunits to proton translocation. Part of the complex F(0) domain. Minor subunit located with subunit a in the membrane. The sequence is that of ATP synthase protein 8 (mt:ATPase8) from Drosophila sechellia (Fruit fly).